A 414-amino-acid chain; its full sequence is Putative competence-damage inducible protein (414 aa).

This sequence belongs to the CinA family.

The protein is Putative competence-damage inducible protein of Clostridium novyi (strain NT).